The following is a 110-amino-acid chain: MQAKATAKFVRVSPRKARLVAQNVKGKPVEDAMNILRFTPQKAGGLIFKVMHSALANAEQLPGIDVDAMVVKQVIINEGPTWKRFLPRSMGRANRILKRTSHITVILEES.

This sequence belongs to the universal ribosomal protein uL22 family. As to quaternary structure, part of the 50S ribosomal subunit.

Functionally, this protein binds specifically to 23S rRNA; its binding is stimulated by other ribosomal proteins, e.g. L4, L17, and L20. It is important during the early stages of 50S assembly. It makes multiple contacts with different domains of the 23S rRNA in the assembled 50S subunit and ribosome. The globular domain of the protein is located near the polypeptide exit tunnel on the outside of the subunit, while an extended beta-hairpin is found that lines the wall of the exit tunnel in the center of the 70S ribosome. This chain is Large ribosomal subunit protein uL22, found in Oleidesulfovibrio alaskensis (strain ATCC BAA-1058 / DSM 17464 / G20) (Desulfovibrio alaskensis).